Here is a 540-residue protein sequence, read N- to C-terminus: Glucose-6-phosphate isomerase (540 aa).

Residue E346 is the Proton donor of the active site. Residues H377 and K505 contribute to the active site.

Belongs to the GPI family.

It is found in the cytoplasm. It carries out the reaction alpha-D-glucose 6-phosphate = beta-D-fructose 6-phosphate. Its pathway is carbohydrate biosynthesis; gluconeogenesis. It functions in the pathway carbohydrate degradation; glycolysis; D-glyceraldehyde 3-phosphate and glycerone phosphate from D-glucose: step 2/4. Functionally, catalyzes the reversible isomerization of glucose-6-phosphate to fructose-6-phosphate. This chain is Glucose-6-phosphate isomerase, found in Francisella tularensis subsp. mediasiatica (strain FSC147).